A 273-amino-acid polypeptide reads, in one-letter code: Probable ribosomal RNA small subunit methyltransferase A (273 aa).

The S-adenosyl-L-methionine site is built by Asn26, Leu28, Gly53, Glu74, Asp98, and Asn113.

Belongs to the class I-like SAM-binding methyltransferase superfamily. rRNA adenine N(6)-methyltransferase family. RsmA subfamily.

It is found in the cytoplasm. Its function is as follows. Specifically dimethylates two adjacent adenosines in the loop of a conserved hairpin near the 3'-end of 16S rRNA in the 30S particle. May play a critical role in biogenesis of 30S subunits. The sequence is that of Probable ribosomal RNA small subunit methyltransferase A from Methanothermobacter thermautotrophicus (strain ATCC 29096 / DSM 1053 / JCM 10044 / NBRC 100330 / Delta H) (Methanobacterium thermoautotrophicum).